The primary structure comprises 330 residues: Tryptophan--tRNA ligase (330 aa).

ATP contacts are provided by residues glutamine 10–threonine 12 and glycine 18–asparagine 19. A 'HIGH' region motif is present at residues threonine 11–asparagine 19. Aspartate 134 contacts L-tryptophan. ATP-binding positions include glycine 146 to aspartate 148, isoleucine 186, and lysine 195 to serine 199. A 'KMSKS' region motif is present at residues lysine 195–serine 199.

It belongs to the class-I aminoacyl-tRNA synthetase family. Homodimer.

It localises to the cytoplasm. It carries out the reaction tRNA(Trp) + L-tryptophan + ATP = L-tryptophyl-tRNA(Trp) + AMP + diphosphate + H(+). Catalyzes the attachment of tryptophan to tRNA(Trp). This chain is Tryptophan--tRNA ligase, found in Rickettsia prowazekii (strain Madrid E).